The following is a 248-amino-acid chain: uncharacterized protein (248 aa).

Residues 30–50 (LIALAIFIGLIAIFMFGCKAA) traverse the membrane as a helical segment. Disordered stretches follow at residues 59–91 (NRDT…MDPP) and 208–248 (TTES…VSTR). Polar residues-rich tracts occupy residues 210-220 (ESPAPAQSTSN) and 239-248 (SLHNETVSTR).

The protein resides in the membrane. This is an uncharacterized protein from Caenorhabditis elegans.